The chain runs to 794 residues: 6-hydroxypseudooxynicotine dehydrogenase complex subunit gamma (794 aa).

As to quaternary structure, heterohexamer of 2 alpha (kdhA), 2 beta (kdhB) and 2 gamma (kdhC) subunit. Dimer of heterotrimers. Mo-molybdopterin cytosine dinucleotide serves as cofactor.

It catalyses the reaction 6-hydroxypseudooxynicotine + A + H2O = 2,6-dihydroxypseudooxynicotine + AH2. It participates in alkaloid degradation; nicotine degradation. Functionally, molybdo-flavoprotein enzyme complex involved in nicotine degradation. The subunit gamma (large subunit) contains the substrate-binding sites, the subunit alpha (medium subunit) binds FAD and the subunit beta (small subunit) has a 2Fe-2S ferredoxin-type domain which binds 2 2Fe-2S clusters. This Paenarthrobacter nicotinovorans (Arthrobacter nicotinovorans) protein is 6-hydroxypseudooxynicotine dehydrogenase complex subunit gamma (kdhC).